Here is a 545-residue protein sequence, read N- to C-terminus: Glucans biosynthesis protein G (545 aa).

An N-terminal signal peptide occupies residues 1–34 (MVSLLRCQSFKPSSSLICSLALSAAFALSSSAFA). The tract at residues 38–60 (KPAENKPATPVVSPPKATAQPAN) is disordered.

Belongs to the OpgD/OpgG family.

The protein localises to the periplasm. It participates in glycan metabolism; osmoregulated periplasmic glucan (OPG) biosynthesis. In terms of biological role, involved in the biosynthesis of osmoregulated periplasmic glucans (OPGs). The chain is Glucans biosynthesis protein G from Shewanella sp. (strain MR-7).